The chain runs to 485 residues: Delta(14)-sterol reductase ERG24A (485 aa).

The next 4 membrane-spanning stretches (helical) occupy residues 18–38 (FFGPPGAFAISFFLPVLVYVF), 77–97 (GLVSWNGTLAVIGYNVLSLIL), 131–151 (LAVLAAGTIAQGAEFPVWTFM), and 155–175 (FIQILSANIIYSYLVSTFVYV). N-linked (GlcNAc...) asparagine glycosylation occurs at asparagine 240. 4 helical membrane-spanning segments follow: residues 259–279 (ILITAVQALYVFDSWWNEPAI), 285–305 (ITTDGFGMMLAFGDIVWVPYV), 319–339 (SLGPLGLAAMLGLIGLGFYIF), and 431–451 (AQGWGMLITYFYILYFGILLI).

It belongs to the ERG4/ERG24 family.

Its subcellular location is the endoplasmic reticulum membrane. It carries out the reaction 4,4-dimethyl-5alpha-cholesta-8,24-dien-3beta-ol + NADP(+) = 4,4-dimethyl-5alpha-cholesta-8,14,24-trien-3beta-ol + NADPH + H(+). The protein operates within steroid metabolism; ergosterol biosynthesis. In terms of biological role, delta(14)-sterol reductase; part of the third module of ergosterol biosynthesis pathway that includes the late steps of the pathway. Catalyzes the reduction of the C14=C15 double bond within 4,4,24-trimethyl ergosta-8,14,24(28)-trienolto produce 4,4-dimethylfecosterol. The third module or late pathway involves the ergosterol synthesis itself through consecutive reactions that mainly occur in the endoplasmic reticulum (ER) membrane. Firstly, the squalene synthase ERG9 catalyzes the condensation of 2 farnesyl pyrophosphate moieties to form squalene, which is the precursor of all steroids. Squalene synthase is crucial for balancing the incorporation of farnesyl diphosphate (FPP) into sterol and nonsterol isoprene synthesis. Secondly, squalene is converted into lanosterol by the consecutive action of the squalene epoxidase ERG1 and the lanosterol synthase ERG7. Then, the delta(24)-sterol C-methyltransferase ERG6 methylates lanosterol at C-24 to produce eburicol. Eburicol is the substrate of the sterol 14-alpha demethylase encoded by CYP51A, CYP51B and CYP51C, to yield 4,4,24-trimethyl ergosta-8,14,24(28)-trienol. CYP51B encodes the enzyme primarily responsible for sterol 14-alpha-demethylation, and plays an essential role in ascospore formation. CYP51A encodes an additional sterol 14-alpha-demethylase, induced on ergosterol depletion and responsible for the intrinsic variation in azole sensitivity. The third CYP51 isoform, CYP51C, does not encode a sterol 14-alpha-demethylase, but is required for full virulence on host wheat ears. The C-14 reductase ERG24 then reduces the C14=C15 double bond which leads to 4,4-dimethylfecosterol. A sequence of further demethylations at C-4, involving the C-4 demethylation complex containing the C-4 methylsterol oxidases ERG25, the sterol-4-alpha-carboxylate 3-dehydrogenase ERG26 and the 3-keto-steroid reductase ERG27, leads to the production of fecosterol via 4-methylfecosterol. ERG28 has a role as a scaffold to help anchor ERG25, ERG26 and ERG27 to the endoplasmic reticulum. The C-8 sterol isomerase ERG2 then catalyzes the reaction which results in unsaturation at C-7 in the B ring of sterols and thus converts fecosterol to episterol. The sterol-C5-desaturases ERG3A and ERG3BB then catalyze the introduction of a C-5 double bond in the B ring to produce 5-dehydroepisterol. The C-22 sterol desaturases ERG5A and ERG5B further convert 5-dehydroepisterol into ergosta-5,7,22,24(28)-tetraen-3beta-ol by forming the C-22(23) double bond in the sterol side chain. Finally, ergosta-5,7,22,24(28)-tetraen-3beta-ol is substrate of the C-24(28) sterol reductase ERG4 to produce ergosterol. The polypeptide is Delta(14)-sterol reductase ERG24A (Gibberella zeae (strain ATCC MYA-4620 / CBS 123657 / FGSC 9075 / NRRL 31084 / PH-1) (Wheat head blight fungus)).